The sequence spans 362 residues: Probable dual-specificity RNA methyltransferase RlmN (362 aa).

Residue E105 is the Proton acceptor of the active site. Positions 111–344 (HEYGNSICVT…VTIRREQGHD (234 aa)) constitute a Radical SAM core domain. A disulfide bridge links C118 with C349. Positions 125, 129, and 132 each coordinate [4Fe-4S] cluster. Residues 175–176 (GE), S207, 230–232 (SLH), and N306 contribute to the S-adenosyl-L-methionine site. C349 serves as the catalytic S-methylcysteine intermediate.

It belongs to the radical SAM superfamily. RlmN family. Requires [4Fe-4S] cluster as cofactor.

Its subcellular location is the cytoplasm. The enzyme catalyses adenosine(2503) in 23S rRNA + 2 reduced [2Fe-2S]-[ferredoxin] + 2 S-adenosyl-L-methionine = 2-methyladenosine(2503) in 23S rRNA + 5'-deoxyadenosine + L-methionine + 2 oxidized [2Fe-2S]-[ferredoxin] + S-adenosyl-L-homocysteine. It catalyses the reaction adenosine(37) in tRNA + 2 reduced [2Fe-2S]-[ferredoxin] + 2 S-adenosyl-L-methionine = 2-methyladenosine(37) in tRNA + 5'-deoxyadenosine + L-methionine + 2 oxidized [2Fe-2S]-[ferredoxin] + S-adenosyl-L-homocysteine. Its function is as follows. Specifically methylates position 2 of adenine 2503 in 23S rRNA and position 2 of adenine 37 in tRNAs. This chain is Probable dual-specificity RNA methyltransferase RlmN, found in Bacillus cytotoxicus (strain DSM 22905 / CIP 110041 / 391-98 / NVH 391-98).